A 319-amino-acid polypeptide reads, in one-letter code: 1-aminocyclopropane-1-carboxylate oxidase (319 aa).

The 101-residue stretch at 153–253 (PTFGTKVSNY…RMSIASFYNP (101 aa)) folds into the Fe2OG dioxygenase domain. Fe cation-binding residues include His-177, Asp-179, and His-234.

The protein belongs to the iron/ascorbate-dependent oxidoreductase family. The cofactor is Fe cation.

It carries out the reaction 1-aminocyclopropane-1-carboxylate + L-ascorbate + O2 = ethene + L-dehydroascorbate + hydrogen cyanide + CO2 + 2 H2O. It participates in alkene biosynthesis; ethylene biosynthesis via S-adenosyl-L-methionine; ethylene from S-adenosyl-L-methionine: step 2/2. This is 1-aminocyclopropane-1-carboxylate oxidase (ACO1) from Prunus mume (Japanese apricot).